A 778-amino-acid chain; its full sequence is MEVNDTSLHKGFGLDINSQRVFGAQAAISRNNYSKVNASINPSPPRSNDNSNKEFSYSKDVNNNGAVEELSLTQLFEVPSQAAFAKQSSQDISDDELIQHDSRKVISSPYSPKQTHTVLKRLYDRQSVISDHEKLLTPQNVSNSSQILSPFTSLLPSTLSTLKDTPLSVSQNEKNLETVGEVLVPETVAQHRTKFYDYTLDEMENETESGQVETTPTRLATSLGSPVLYGRVESTPPAFLPETSEKQYKRKFSFTEPSSEKVDNTETKFSKKTKNINDENFPNPFNVISSYETSASPSTVIDQSSQVSSIFVNKRLRKSVNNQAISRSDSLSLDTPKIDSLFTRASIKPLKPSQSPNSRRSFKNRVLAFFKGYPSFYYPATLVAPVHSAVTSSIMYKVQFDDATMSTVNSNQIKRFFLKKGDVVQSTRLGKIKHTVVKTFRSTNEQLSLIAVDALNNDMVILAHGEIEVTVPISTIYVAPVNIRRFQGRDLSFSTLKDMKFEETSFLPSHDSQRNRSSLKERDSSFVKKNLDSESNQLIFDDCVFAFSGPVHEDAYDRSALETVVQDHGGLVLDTGLRPLFNDPFKSKQKKLRHLKPQKRSKSWNQAFVVSDTFSRKVKYLEALAFNIPCVHPQFIKQCLKMNRVVDFSPYLLASGYSHRLDCTLSQRIEPFDTTDSLYDRLLARKGPLFGKKILFIIPEAKSWQKKIENTEQGQKALAHVYHALALGADVEIRPNVAHLECDLILTMDGNIVDETNCPVVDPEWIVECLISQSDIST.

The disordered stretch occupies residues 35–56 (KVNASINPSPPRSNDNSNKEFS). At Thr-73 the chain carries Phosphothreonine; by ATM. Ser-80 carries the post-translational modification Phosphoserine; by ATM. An interaction with rad4 region spans residues 141–245 (VSNSSQILSP…PPAFLPETSE (105 aa)). At Thr-187 the chain carries Phosphothreonine. At Thr-215 the chain carries Phosphothreonine; by cdc2. A Phosphothreonine modification is found at Thr-235. The tudor-like stretch occupies residues 358–493 (SRRSFKNRVL…RRFQGRDLSF (136 aa)). The segment at 370–404 (FKGYPSFYYPATLVAPVHSAVTSSIMYKVQFDDAT) is interaction with dimethylated histone H4. The BRCT domain occupies 535–653 (SNQLIFDDCV…RVVDFSPYLL (119 aa)).

In terms of assembly, homodimer. Dimerization is mediated via the BRCT domain. Interacts (via BRCT domain) with rad3. Interacts with rad4 (via BRCT1,2 domains); a single rad4 molecule interacts simultaneously with both Thr-187 phosphorylation sites in a crb2 dimer. Interacts (via Tudor domain) with histone H4K20me2. Interacts (via BRCT dmain) with histone H2AS128ph (gamma-H2A). Interacts with chk1. Interacts with sad1. Post-translationally, phosphorylation of Thr-73 and Ser-80 by rad3/ATM promotes interaction with chk1. Phosphorylation at Thr-187 is dependent on phosphorylation at Thr-215 and Thr-235. Phosphorylation at Thr-215 and Thr-235 may prime the non-canonical Thr-187 site for cdc2/CDK phosphorylation.

It localises to the nucleus. Functionally, essential for cell cycle arrest at the G1 and G2 stages following DNA damage by X-, and UV-irradiation, or inactivation of DNA ligase. Plays a role in the response to DNA damage. Interaction with rad4 via its phosphorylation sites in the N-terminus couples the DNA checkpoint apparatus to chromatin via interaction of its C-terminal BRCT domains with epigenetic modifications on histones H4 and H2A, respectively, in the G1/S phase of the cell cycle, and facilitates recruitment of the checkpoint kinase chk1. This is DNA repair protein crb2 from Schizosaccharomyces pombe (strain 972 / ATCC 24843) (Fission yeast).